Here is a 271-residue protein sequence, read N- to C-terminus: MNFQSKFLTRSQSLKSLLCVGLDPDYCKLPEIIKRSPEPLVHFCREIIDATAPYAVAYKPNIAFFEVFGSSGIRQFEKVIGHLKNNYPQIPIVADIKRGDLDNTARQYARYYFGDLQVDSLTLSPYMGLDTLRPFLEYQDHLVFWLCLTSNPDSIQFQKKRFSETGRTLYEEVAYVANSISPLNLGFVVGATNTYELEILRKQNPDRIFLIPGFGAQGAKLDDLLPVCGRYSLINSSRGIHFASDGLDFAARANQEAEKIHNAMQARFVFL.

The active-site Proton donor is the lysine 97.

The protein belongs to the OMP decarboxylase family. Type 2 subfamily.

The enzyme catalyses orotidine 5'-phosphate + H(+) = UMP + CO2. Its pathway is pyrimidine metabolism; UMP biosynthesis via de novo pathway; UMP from orotate: step 2/2. The protein is Orotidine 5'-phosphate decarboxylase of Leptospira borgpetersenii serovar Hardjo-bovis (strain L550).